We begin with the raw amino-acid sequence, 699 residues long: Elongation factor G (699 aa).

The region spanning E8–V290 is the tr-type G domain. GTP contacts are provided by residues A17–T24, D88–H92, and N142–D145.

It belongs to the TRAFAC class translation factor GTPase superfamily. Classic translation factor GTPase family. EF-G/EF-2 subfamily.

The protein resides in the cytoplasm. In terms of biological role, catalyzes the GTP-dependent ribosomal translocation step during translation elongation. During this step, the ribosome changes from the pre-translocational (PRE) to the post-translocational (POST) state as the newly formed A-site-bound peptidyl-tRNA and P-site-bound deacylated tRNA move to the P and E sites, respectively. Catalyzes the coordinated movement of the two tRNA molecules, the mRNA and conformational changes in the ribosome. The protein is Elongation factor G of Alkalilimnicola ehrlichii (strain ATCC BAA-1101 / DSM 17681 / MLHE-1).